Reading from the N-terminus, the 403-residue chain is 3-oxoacyl-[acyl-carrier-protein] synthase 2 (403 aa).

A Ketosynthase family 3 (KS3) domain is found at V1–K403. Active-site for beta-ketoacyl synthase activity residues include C158, H297, and H334.

Belongs to the thiolase-like superfamily. Beta-ketoacyl-ACP synthases family.

The enzyme catalyses a fatty acyl-[ACP] + malonyl-[ACP] + H(+) = a 3-oxoacyl-[ACP] + holo-[ACP] + CO2. It carries out the reaction (9Z)-hexadecenoyl-[ACP] + malonyl-[ACP] + H(+) = 3-oxo-(11Z)-octadecenoyl-[ACP] + holo-[ACP] + CO2. Its pathway is lipid metabolism; fatty acid biosynthesis. In terms of biological role, involved in the type II fatty acid elongation cycle. Catalyzes the elongation of a wide range of acyl-ACP by the addition of two carbons from malonyl-ACP to an acyl acceptor. Can efficiently catalyze the conversion of palmitoleoyl-ACP (cis-hexadec-9-enoyl-ACP) to cis-vaccenoyl-ACP (cis-octadec-11-enoyl-ACP), an essential step in the thermal regulation of fatty acid composition. The polypeptide is 3-oxoacyl-[acyl-carrier-protein] synthase 2 (fabF) (Staphylococcus aureus).